A 143-amino-acid polypeptide reads, in one-letter code: Large ribosomal subunit protein uL13 (143 aa).

Belongs to the universal ribosomal protein uL13 family. As to quaternary structure, part of the 50S ribosomal subunit.

This protein is one of the early assembly proteins of the 50S ribosomal subunit, although it is not seen to bind rRNA by itself. It is important during the early stages of 50S assembly. This chain is Large ribosomal subunit protein uL13, found in Solibacter usitatus (strain Ellin6076).